The chain runs to 344 residues: Probable dual-specificity RNA methyltransferase RlmN (344 aa).

Glutamate 92 serves as the catalytic Proton acceptor. Residues 98-325 enclose the Radical SAM core domain; sequence DEDRATLCVS…TTIRASRGED (228 aa). A disulfide bridge links cysteine 105 with cysteine 330. 3 residues coordinate [4Fe-4S] cluster: cysteine 112, cysteine 116, and cysteine 119. S-adenosyl-L-methionine-binding positions include 157–158, serine 189, 211–213, and histidine 287; these read GE and SLH. Cysteine 330 functions as the S-methylcysteine intermediate in the catalytic mechanism.

The protein belongs to the radical SAM superfamily. RlmN family. [4Fe-4S] cluster is required as a cofactor.

It localises to the cytoplasm. The catalysed reaction is adenosine(2503) in 23S rRNA + 2 reduced [2Fe-2S]-[ferredoxin] + 2 S-adenosyl-L-methionine = 2-methyladenosine(2503) in 23S rRNA + 5'-deoxyadenosine + L-methionine + 2 oxidized [2Fe-2S]-[ferredoxin] + S-adenosyl-L-homocysteine. The enzyme catalyses adenosine(37) in tRNA + 2 reduced [2Fe-2S]-[ferredoxin] + 2 S-adenosyl-L-methionine = 2-methyladenosine(37) in tRNA + 5'-deoxyadenosine + L-methionine + 2 oxidized [2Fe-2S]-[ferredoxin] + S-adenosyl-L-homocysteine. Specifically methylates position 2 of adenine 2503 in 23S rRNA and position 2 of adenine 37 in tRNAs. The sequence is that of Probable dual-specificity RNA methyltransferase RlmN from Bacteroides fragilis (strain ATCC 25285 / DSM 2151 / CCUG 4856 / JCM 11019 / LMG 10263 / NCTC 9343 / Onslow / VPI 2553 / EN-2).